A 228-amino-acid chain; its full sequence is L-ribulose-5-phosphate 4-epimerase UlaF (228 aa).

Substrate contacts are provided by residues 26–27 (GN), 43–44 (SG), and 72–73 (SS). The Zn(2+) site is built by aspartate 74, histidine 93, and histidine 95. The active-site Proton donor/acceptor is the aspartate 118. Position 167 (histidine 167) interacts with Zn(2+). Tyrosine 225 (proton donor/acceptor) is an active-site residue.

Belongs to the aldolase class II family. AraD/FucA subfamily. The cofactor is Zn(2+).

It catalyses the reaction L-ribulose 5-phosphate = D-xylulose 5-phosphate. The protein operates within cofactor degradation; L-ascorbate degradation; D-xylulose 5-phosphate from L-ascorbate: step 4/4. Functionally, catalyzes the isomerization of L-ribulose 5-phosphate to D-xylulose 5-phosphate. Is involved in the anaerobic L-ascorbate utilization. The sequence is that of L-ribulose-5-phosphate 4-epimerase UlaF from Shigella sonnei (strain Ss046).